Here is an 806-residue protein sequence, read N- to C-terminus: Transitional endoplasmic reticulum ATPase (806 aa).

Residue A2 is modified to N-acetylalanine. Phosphoserine is present on residues S3 and S7. K8 participates in a covalent cross-link: Glycyl lysine isopeptide (Lys-Gly) (interchain with G-Cter in SUMO2). Phosphoserine is present on S13. A Glycyl lysine isopeptide (Lys-Gly) (interchain with G-Cter in SUMO2) cross-link involves residue K18. At S37 the chain carries Phosphoserine. 247–253 (PGTGKTL) is a binding site for ATP. K315 bears the N6,N6,N6-trimethyllysine; by VCPKMT mark. ATP is bound by residues N348 and H384. Phosphothreonine is present on T436. S462 is modified (phosphoserine). Residues K502 and K505 each carry the N6-acetyllysine modification. 521–526 (GCGKTL) contributes to the ATP binding site. An N6-acetyllysine; alternate modification is found at K668. K668 bears the N6-succinyllysine; alternate mark. Residue S702 is modified to Phosphoserine. The segment at 708 to 727 (RRERERQTNPSAMEVEEDDP) is disordered. An N6-acetyllysine modification is found at K754. A disordered region spans residues 768-806 (FGSFRFPSGNQGGAGPSQGSGGGTGGSVYTEDNDDDLYG). Phosphoserine is present on residues S770, S775, and S787. Residues 777 to 793 (NQGGAGPSQGSGGGTGG) show a composition bias toward gly residues. Residues 797–806 (TEDNDDDLYG) are interaction with UBXN6. Y805 carries the post-translational modification Phosphotyrosine.

It belongs to the AAA ATPase family. As to quaternary structure, homohexamer. Forms a ring-shaped particle of 12.5 nm diameter, that displays 6-fold radial symmetry. Part of a ternary complex containing STX5A, NSFL1C and VCP. NSFL1C forms a homotrimer that binds to one end of a VCP homohexamer. The complex binds to membranes enriched in phosphatidylethanolamine-containing lipids and promotes Golgi membrane fusion. Binds to a heterodimer of NPLOC4 and UFD1, binding to this heterodimer inhibits Golgi-membrane fusion. Interaction with VCIP135 leads to dissociation of the complex via ATP hydrolysis by VCP. Part of a ternary complex containing NPLOC4, UFD1 and VCP. Interacts with NSFL1C-like protein p37; the complex has membrane fusion activity and is required for Golgi and endoplasmic reticulum biogenesis. Interacts with SELENOS and SYVN1, as well as with DERL1 (via SHP-box motif), DERL2 and DERL3; which probably transfer misfolded proteins from the ER to VCP. Interacts with SVIP and DERL1. Component of a complex required to couple retrotranslocation, ubiquitination and deglycosylation composed of NGLY1, SAKS1, AMFR, VCP and RAD23B. Part of a complex composed of STUB1/CHIP, VCP/p97, CHRNA3, and UBXN2A that modulates the ubiquitination and endoplasmic reticulum-associated degradation (ERAD) of CHRNA3. Within the complex UBXN2A acts as a scaffold protein required for the interaction of CHRNA3 with VCP/p97, this interaction also inhibits CHRNA3 ubiquitination by STUB1/CHIP and subsequently ERAD. Interacts with UBXN2A (via UBX domain); the interaction is required for the interaction of CHRNA3 in the STUB1-VCP-UBXN2A complex. Directly interacts with UBXN4 and RNF19A. Interacts with CASR. Interacts with UBE4B and YOD1. Interacts with clathrin. Interacts with RNF103. Interacts with TRIM13 and TRIM21. Component of a VCP/p97-AMFR/gp78 complex that participates in the final step of the endoplasmic reticulum-associated degradation (ERAD) of HMGCR. Interacts directly with AMFR/gp78 (via its VIM). Interacts with RHBDD1 (via C-terminal domain). Interacts with SPRTN; leading to recruitment to stalled replication forks. Interacts with WASHC5. Interacts with UBOX5. Interacts (via N-terminus) with UBXN7, UBXN8, and probably several other UBX domain-containing proteins (via UBX domains); the interactions are mutually exclusive with VIM-dependent interactions such as those with AMFR and SELENOS. Forms a complex with UBQLN1 and UBXN4. Interacts (via the PIM motif) with RNF31 (via the PUB domain). Interacts with RIGI and RNF125; interaction takes place when RIGI is ubiquitinated via 'Lys-63'-linked ubiquitin on its CARD domains, leading to recruit RNF125 and promote ubiquitination and degradation of RIGI. Interacts with BAG6. Interacts with UBXN10. Interacts with UBXN6; the interaction with UBXN6 is direct and competitive with UFD1. Forms a ternary complex with CAV1 and UBXN6. Interacts with PLAA, UBXN6 and YOD1; may form a complex involved in macroautophagy. Interacts with ANKZF1. Interacts with ubiquitin-binding protein FAF1. Interacts with ZFAND2B (via VIM motif); the interaction is direct. Interacts with ZFAND1 (via its ubiquitin-like region); this interaction occurs in an arsenite-dependent manner. Interacts with CCDC47. Interacts with LMBR1L and UBAC2. Interacts with ATXN3. Interacts with TEX264; bridging VCP to covalent DNA-protein cross-links (DPCs). It depends on Mg(2+) as a cofactor. Post-translationally, ISGylated. In terms of processing, methylation at Lys-315 catalyzed by VCPKMT is increased in the presence of ASPSCR1. Lys-315 methylation may decrease ATPase activity. Phosphorylated by tyrosine kinases in response to T-cell antigen receptor activation. Phosphorylated in mitotic cells.

The protein localises to the cytoplasm. It localises to the cytosol. The protein resides in the endoplasmic reticulum. It is found in the nucleus. Its subcellular location is the stress granule. It catalyses the reaction ATP + H2O = ADP + phosphate + H(+). Necessary for the fragmentation of Golgi stacks during mitosis and for their reassembly after mitosis. Involved in the formation of the transitional endoplasmic reticulum (tER). The transfer of membranes from the endoplasmic reticulum to the Golgi apparatus occurs via 50-70 nm transition vesicles which derive from part-rough, part-smooth transitional elements of the endoplasmic reticulum (tER). Vesicle budding from the tER is an ATP-dependent process. The ternary complex containing UFD1, VCP and NPLOC4 binds ubiquitinated proteins and is necessary for the export of misfolded proteins from the ER to the cytoplasm, where they are degraded by the proteasome. The NPLOC4-UFD1-VCP complex regulates spindle disassembly at the end of mitosis and is necessary for the formation of a closed nuclear envelope. Regulates E3 ubiquitin-protein ligase activity of RNF19A. Component of the VCP/p97-AMFR/gp78 complex that participates in the final step of the sterol-mediated ubiquitination and endoplasmic reticulum-associated degradation (ERAD) of HMGCR. Mediates the endoplasmic reticulum-associated degradation of CHRNA3 in cortical neurons as part of the STUB1-VCP-UBXN2A complex. Involved in endoplasmic reticulum stress-induced pre-emptive quality control, a mechanism that selectively attenuates the translocation of newly synthesized proteins into the endoplasmic reticulum and reroutes them to the cytosol for proteasomal degradation. Involved in clearance process by mediating G3BP1 extraction from stress granules. Also involved in DNA damage response: recruited to double-strand breaks (DSBs) sites in a RNF8- and RNF168-dependent manner and promotes the recruitment of TP53BP1 at DNA damage sites. Recruited to stalled replication forks by SPRTN: may act by mediating extraction of DNA polymerase eta (POLH) to prevent excessive translesion DNA synthesis and limit the incidence of mutations induced by DNA damage. Together with SPRTN metalloprotease, involved in the repair of covalent DNA-protein cross-links (DPCs) during DNA synthesis. Involved in interstrand cross-link repair in response to replication stress by mediating unloading of the ubiquitinated CMG helicase complex. Mediates extraction of PARP1 trapped to chromatin: recognizes and binds ubiquitinated PARP1 and promotes its removal. Required for cytoplasmic retrotranslocation of stressed/damaged mitochondrial outer-membrane proteins and their subsequent proteasomal degradation. Essential for the maturation of ubiquitin-containing autophagosomes and the clearance of ubiquitinated protein by autophagy. Acts as a negative regulator of type I interferon production by interacting with RIGI: interaction takes place when RIGI is ubiquitinated via 'Lys-63'-linked ubiquitin on its CARD domains, leading to recruit RNF125 and promote ubiquitination and degradation of RIGI. May play a role in the ubiquitin-dependent sorting of membrane proteins to lysosomes where they undergo degradation. May more particularly play a role in caveolins sorting in cells. By controlling the steady-state expression of the IGF1R receptor, indirectly regulates the insulin-like growth factor receptor signaling pathway. The polypeptide is Transitional endoplasmic reticulum ATPase (VCP) (Sus scrofa (Pig)).